A 256-amino-acid polypeptide reads, in one-letter code: Short-chain dehydrogenase/reductase cdmF (256 aa).

Positions 11, 57, and 119 each coordinate NADP(+). Residue Ser-137 is the Proton donor of the active site. NADP(+) is bound by residues Tyr-151, Lys-155, Gly-183, and Asn-187. Tyr-151 (proton acceptor) is an active-site residue. The active-site Lowers pKa of active site Tyr is Lys-155.

This sequence belongs to the short-chain dehydrogenases/reductases (SDR) family.

The catalysed reaction is 3-hydroxypentacecilide A + A = chrodrimanin C + AH2. It carries out the reaction chrodrimanin F + A = chrodrimanin H + AH2. The protein operates within secondary metabolite biosynthesis; terpenoid biosynthesis. Short-chain dehydrogenase/reductase; part of the gene cluster that mediates the biosynthesis of chrodrimanin B, a meroterpenoid that acts as a potent blocker of insect GABA-gated chloride channels. The first step of the pathway is the biosynthesis of 6-hydroxymellein by the polyketide synthase cdmE. The prenyltransferase cdmH acts as a 6-hydroxymellein 5-farnesyltransferase and produces the hydrophobic metabolite verruculide C. The FAD-dependent monooxygenase cdmI further converts verruculide C into verruculide B. The terpene cyclase cdmG then produced the pentacyclic molecule 3-hydroxypentacecilide A, the backbone structure of chrodrimanin B, via folding the farnesyl moiety of the substrate into the chair-boat conformation. The short-chain dehydrogenase/reductase cdmF functions as the 3-OH dehydrogenase that oxidizes the C-3 hydroxyl group of 3-hydroxypentacecilide A and produces chrodrimanin C, the dehydrogenated product of 3-hydroxypentacecilide A. The cytochrome P450 monooxygenase cdmJ then accepts both 3-hydroxypentacecilide A and chrodrimanin C and functions as a C-7-beta-hydroxylase to produce respectively chrodrimanin H and chrodrimanin F. The dioxygenase cdmA accepts chrodrimanin H to afford chrodrimanin E, which is further transformed to chrodrimanin A by the dioxygenase cdmD. CdmA can also accept chrodrimanin C as substrate to convert it into verruculide A, which is further converted into chrodrimanin T by cdmD. The last step of the biosynthesis is proposed to be performed by the acetyltransferase cdmC which acetylates chrodrimanin A to yield chrodrimanin B. The pathway may also lead to the production of additional shunt products, including chrodrimanins T and U. This is Short-chain dehydrogenase/reductase cdmF from Talaromyces verruculosus (Penicillium verruculosum).